A 162-amino-acid chain; its full sequence is Phosphopantetheine adenylyltransferase (162 aa).

Position 14 (T14) interacts with substrate. ATP is bound by residues T14–F15 and H22. Substrate is bound by residues K46, L78, and R92. Residues G93–R95, E103, and H128–S134 each bind ATP.

The protein belongs to the bacterial CoaD family. Homohexamer. Mg(2+) is required as a cofactor.

The protein localises to the cytoplasm. It catalyses the reaction (R)-4'-phosphopantetheine + ATP + H(+) = 3'-dephospho-CoA + diphosphate. Its pathway is cofactor biosynthesis; coenzyme A biosynthesis; CoA from (R)-pantothenate: step 4/5. Functionally, reversibly transfers an adenylyl group from ATP to 4'-phosphopantetheine, yielding dephospho-CoA (dPCoA) and pyrophosphate. In Xylella fastidiosa (strain M23), this protein is Phosphopantetheine adenylyltransferase.